A 115-amino-acid chain; its full sequence is Splicing factor 3B subunit 6-like protein (115 aa).

The interaction with pre-mRNA branch site stretch occupies residues 9–22 (EVNSILFIKNLSFK). In terms of domain architecture, RRM spans 12–87 (SILFIKNLSF…RYLVVHYYNP (76 aa)).

Its subcellular location is the nucleus. In terms of biological role, necessary for the splicing of pre-mRNA. The protein is Splicing factor 3B subunit 6-like protein of Schizosaccharomyces pombe (strain 972 / ATCC 24843) (Fission yeast).